We begin with the raw amino-acid sequence, 109 residues long: Hainantoxin-XVIII-7 (109 aa).

The first 18 residues, 1 to 18, serve as a signal peptide directing secretion; sequence MKLSIIIIATSLVIAVVA. Residues 19 to 46 constitute a propeptide that is removed on maturation; the sequence is FPSKDSKAIENDKTEQRMEIVVQETARA. 4 cysteine pairs are disulfide-bonded: cysteine 47–cysteine 62, cysteine 55–cysteine 68, cysteine 59–cysteine 108, and cysteine 61–cysteine 81.

Belongs to the neurotoxin 25 family. F7 subfamily. Expressed by the venom gland.

The protein localises to the secreted. Its function is as follows. Putative ion channel inhibitor. The chain is Hainantoxin-XVIII-7 from Cyriopagopus hainanus (Chinese bird spider).